The sequence spans 159 residues: Ribosomal RNA large subunit methyltransferase H (159 aa).

S-adenosyl-L-methionine is bound by residues leucine 76, glycine 108, and 127-132 (FSKMTL).

This sequence belongs to the RNA methyltransferase RlmH family. As to quaternary structure, homodimer.

The protein localises to the cytoplasm. The catalysed reaction is pseudouridine(1915) in 23S rRNA + S-adenosyl-L-methionine = N(3)-methylpseudouridine(1915) in 23S rRNA + S-adenosyl-L-homocysteine + H(+). In terms of biological role, specifically methylates the pseudouridine at position 1915 (m3Psi1915) in 23S rRNA. This is Ribosomal RNA large subunit methyltransferase H from Bacillus thuringiensis subsp. konkukian (strain 97-27).